The chain runs to 140 residues: ATP synthase epsilon chain (140 aa).

The protein belongs to the ATPase epsilon chain family. In terms of assembly, F-type ATPases have 2 components, CF(1) - the catalytic core - and CF(0) - the membrane proton channel. CF(1) has five subunits: alpha(3), beta(3), gamma(1), delta(1), epsilon(1). CF(0) has three main subunits: a, b and c.

Its subcellular location is the cell membrane. Its function is as follows. Produces ATP from ADP in the presence of a proton gradient across the membrane. This is ATP synthase epsilon chain from Baumannia cicadellinicola subsp. Homalodisca coagulata.